Here is a 509-residue protein sequence, read N- to C-terminus: tRNA-2-methylthio-N(6)-dimethylallyladenosine synthase (509 aa).

Residues 1-15 (MNEQQRLASQQVNSS) are compositionally biased toward polar residues. Positions 1 to 23 (MNEQQRLASQQVNSSTKKEEKDY) are disordered. An MTTase N-terminal domain is found at 66–184 (RKFYIRTYGC…LPYILKDAMF (119 aa)). 6 residues coordinate [4Fe-4S] cluster: C75, C111, C145, C221, C225, and C228. The 231-residue stretch at 207-437 (RRGDIKAWVN…NALVNKLAIE (231 aa)) folds into the Radical SAM core domain. The TRAM domain occupies 440–503 (DRYKGQIVEV…TWSLNGELVE (64 aa)).

This sequence belongs to the methylthiotransferase family. MiaB subfamily. As to quaternary structure, monomer. The cofactor is [4Fe-4S] cluster.

It is found in the cytoplasm. It carries out the reaction N(6)-dimethylallyladenosine(37) in tRNA + (sulfur carrier)-SH + AH2 + 2 S-adenosyl-L-methionine = 2-methylsulfanyl-N(6)-dimethylallyladenosine(37) in tRNA + (sulfur carrier)-H + 5'-deoxyadenosine + L-methionine + A + S-adenosyl-L-homocysteine + 2 H(+). Its function is as follows. Catalyzes the methylthiolation of N6-(dimethylallyl)adenosine (i(6)A), leading to the formation of 2-methylthio-N6-(dimethylallyl)adenosine (ms(2)i(6)A) at position 37 in tRNAs that read codons beginning with uridine. This Bacillus anthracis protein is tRNA-2-methylthio-N(6)-dimethylallyladenosine synthase.